A 453-amino-acid polypeptide reads, in one-letter code: Chromosomal replication initiator protein DnaA (453 aa).

The interval 1–74 (MKEKQFWNRI…GFEIYDAEIT (74 aa)) is domain I, interacts with DnaA modulators. Residues 74–113 (TPHYIFTKPQDTTSSQVEEATNLTLYNYSPKLVSIPYSDT) are domain II. A domain III, AAA+ region region spans residues 114-331 (GLKEKYTFDN…GAINDITLIA (218 aa)). ATP is bound by residues glycine 158, glycine 160, lysine 161, and threonine 162. Residues 332–453 (RVKKIKDITI…EIESIKKKIK (122 aa)) form a domain IV, binds dsDNA region.

Belongs to the DnaA family. As to quaternary structure, oligomerizes as a right-handed, spiral filament on DNA at oriC.

The protein resides in the cytoplasm. Functionally, plays an essential role in the initiation and regulation of chromosomal replication. ATP-DnaA binds to the origin of replication (oriC) to initiate formation of the DNA replication initiation complex once per cell cycle. Binds the DnaA box (a 9 base pair repeat at the origin) and separates the double-stranded (ds)DNA. Forms a right-handed helical filament on oriC DNA; dsDNA binds to the exterior of the filament while single-stranded (ss)DNA is stabiized in the filament's interior. The ATP-DnaA-oriC complex binds and stabilizes one strand of the AT-rich DNA unwinding element (DUE), permitting loading of DNA polymerase. After initiation quickly degrades to an ADP-DnaA complex that is not apt for DNA replication. Binds acidic phospholipids. This chain is Chromosomal replication initiator protein DnaA, found in Streptococcus pneumoniae serotype 19F (strain G54).